The following is a 217-amino-acid chain: U exon protein (217 aa).

2 disordered regions span residues 68–110 (SKIF…TNHG) and 170–217 (EKEA…RQGR). A compositionally biased stretch (polar residues) spans 202–217 (GGFQQPTGANQARQGR).

This sequence belongs to the adenoviridae U exon protein family.

The protein localises to the host nucleus. Its subcellular location is the host nucleoplasm. The protein resides in the host nucleolus. Might play a role in viral replication since it is associated with viral replication centers. Seems to have an effect on DBP localization. The protein is U exon protein of Homo sapiens (Human).